A 214-amino-acid polypeptide reads, in one-letter code: MRIVLLGAPGAGKGTQAQFIMEKHGIPQISTGDMLRAAIKAGTELGLNAKAVMDAGQLVSDDIIIGLVKERIAQPDCANGFLLDGFPRTIPQAQAMKDAGVVVDFVLEFDVPDEEIVKRMSGRRVHSGSGRTYHVVFNPPKVEGKDDVTGEDLVIRADDEETTVRKRLDVYHQQTAPLIGFYGKEAEAGNTRYVKIDGTQPVDQVSKQLARILG.

10 to 15 contributes to the ATP binding site; the sequence is GAGKGT. Residues 30–59 form an NMP region; it reads STGDMLRAAIKAGTELGLNAKAVMDAGQLV. AMP-binding positions include Thr-31, Arg-36, 57 to 59, 85 to 88, and Gln-92; these read QLV and GFPR. Positions 122–159 are LID; that stretch reads GRRVHSGSGRTYHVVFNPPKVEGKDDVTGEDLVIRADD. ATP-binding positions include Arg-123 and 132–133; that span reads TY. AMP-binding residues include Arg-156 and Arg-167. Residue Gln-200 coordinates ATP.

Belongs to the adenylate kinase family. Monomer.

Its subcellular location is the cytoplasm. The catalysed reaction is AMP + ATP = 2 ADP. It functions in the pathway purine metabolism; AMP biosynthesis via salvage pathway; AMP from ADP: step 1/1. Catalyzes the reversible transfer of the terminal phosphate group between ATP and AMP. Plays an important role in cellular energy homeostasis and in adenine nucleotide metabolism. The polypeptide is Adenylate kinase (Aeromonas salmonicida (strain A449)).